We begin with the raw amino-acid sequence, 273 residues long: Pyrroline-5-carboxylate reductase (273 aa).

It belongs to the pyrroline-5-carboxylate reductase family.

The protein localises to the cytoplasm. The catalysed reaction is L-proline + NADP(+) = (S)-1-pyrroline-5-carboxylate + NADPH + 2 H(+). It catalyses the reaction L-proline + NAD(+) = (S)-1-pyrroline-5-carboxylate + NADH + 2 H(+). The protein operates within amino-acid biosynthesis; L-proline biosynthesis; L-proline from L-glutamate 5-semialdehyde: step 1/1. Functionally, catalyzes the reduction of 1-pyrroline-5-carboxylate (PCA) to L-proline. This is Pyrroline-5-carboxylate reductase from Pseudomonas aeruginosa (strain ATCC 15692 / DSM 22644 / CIP 104116 / JCM 14847 / LMG 12228 / 1C / PRS 101 / PAO1).